We begin with the raw amino-acid sequence, 542 residues long: Esterase 6 (542 aa).

A signal peptide spans Met-1–Ala-19. Asn-40 carries N-linked (GlcNAc...) asparagine glycosylation. Cys-84 and Cys-103 are disulfide-bonded. The active-site Acyl-ester intermediate is Ser-207. A disulfide bridge connects residues Cys-259 and Cys-271. 2 N-linked (GlcNAc...) asparagine glycosylation sites follow: Asn-418 and Asn-454. The active-site Charge relay system is the His-464. The cysteines at positions 512 and 533 are disulfide-linked.

The protein belongs to the type-B carboxylesterase/lipase family. Monomer.

The protein resides in the secreted. The enzyme catalyses a carboxylic ester + H2O = an alcohol + a carboxylate + H(+). Functionally, transferred from the ejaculatory bulbs of males to the female genitals upon copulation, plays an important role in the reproductive biology. This is Esterase 6 (Est-6) from Drosophila simulans (Fruit fly).